A 96-amino-acid polypeptide reads, in one-letter code: Aspartyl/glutamyl-tRNA(Asn/Gln) amidotransferase subunit C (96 aa).

Belongs to the GatC family. Heterotrimer of A, B and C subunits.

It catalyses the reaction L-glutamyl-tRNA(Gln) + L-glutamine + ATP + H2O = L-glutaminyl-tRNA(Gln) + L-glutamate + ADP + phosphate + H(+). The catalysed reaction is L-aspartyl-tRNA(Asn) + L-glutamine + ATP + H2O = L-asparaginyl-tRNA(Asn) + L-glutamate + ADP + phosphate + 2 H(+). Functionally, allows the formation of correctly charged Asn-tRNA(Asn) or Gln-tRNA(Gln) through the transamidation of misacylated Asp-tRNA(Asn) or Glu-tRNA(Gln) in organisms which lack either or both of asparaginyl-tRNA or glutaminyl-tRNA synthetases. The reaction takes place in the presence of glutamine and ATP through an activated phospho-Asp-tRNA(Asn) or phospho-Glu-tRNA(Gln). This is Aspartyl/glutamyl-tRNA(Asn/Gln) amidotransferase subunit C from Aliarcobacter butzleri (strain RM4018) (Arcobacter butzleri).